The primary structure comprises 386 residues: Succinate--CoA ligase [ADP-forming] subunit beta (386 aa).

The ATP-grasp domain maps to 9 to 244; sequence KAVLRSYGVS…LDEEDSKEIE (236 aa). ATP-binding positions include K46, 53 to 55, E99, C102, and E107; that span reads GRG. 2 residues coordinate Mg(2+): N199 and D213. Substrate-binding positions include N264 and 321 to 323; that span reads GIM.

Belongs to the succinate/malate CoA ligase beta subunit family. Heterotetramer of two alpha and two beta subunits. Mg(2+) serves as cofactor.

The catalysed reaction is succinate + ATP + CoA = succinyl-CoA + ADP + phosphate. It catalyses the reaction GTP + succinate + CoA = succinyl-CoA + GDP + phosphate. Its pathway is carbohydrate metabolism; tricarboxylic acid cycle; succinate from succinyl-CoA (ligase route): step 1/1. Its function is as follows. Succinyl-CoA synthetase functions in the citric acid cycle (TCA), coupling the hydrolysis of succinyl-CoA to the synthesis of either ATP or GTP and thus represents the only step of substrate-level phosphorylation in the TCA. The beta subunit provides nucleotide specificity of the enzyme and binds the substrate succinate, while the binding sites for coenzyme A and phosphate are found in the alpha subunit. The chain is Succinate--CoA ligase [ADP-forming] subunit beta from Bacillus cereus (strain B4264).